Here is a 189-residue protein sequence, read N- to C-terminus: WASH complex subunit homolog 3 (189 aa).

Positions 35-74 (MTEMLNNFGNKMEDILEKAEQSLDTADRKLRLMESKLAGM) form a coiled coil. Disordered regions lie at residues 76–101 (LEDK…NPSS) and 150–189 (SEGV…SDSD). Basic and acidic residues predominate over residues 150 to 165 (SEGVDPSILKRGDEPS). Over residues 167 to 189 (PQAQTSRNYESSGESTASFSDSD) the composition is skewed to polar residues. Thr182 is subject to Phosphothreonine.

This sequence belongs to the CCDC53 family. Probable component of the WASH complex. Component of the DHIC (ddl-1-containing hsf-1 inhibitory complex), which contains at least ddl-1, ddl-2, hsb-1 and hsf-1. Within the complex, interacts with ddl-2. Within the complex, interacts with hsb-1. Within the complex, interacts with hsf-1. Formation of the DHIC may be dependent upon the Insulin/IGF-1-like signaling (IIS) mediated pathway. In terms of processing, phosphorylated. Phosphorylation on Thr-182 may promote DHIC complex dissociation and consequently the activation of heat-shock transcription factor hsf-1. Phosphorylation is modulated by the Insulin/IGF-1-like signaling (IIS) mediated pathway. Expressed in pharynx, intestine, body wall muscles, vulva muscles, spermatheca, and several head and tail neurons.

In terms of biological role, acts as a component of the WASH core complex that functions as a nucleation-promoting factor (NPF) at the surface of endosomes, where it recruits and activates the Arp2/3 complex to induce actin polymerization, playing a key role in the fission of tubules that serve as transport intermediates during endosome sorting. Acts as a component of the DHIC (ddl-1-containing hsf-1 inhibitory complex) which modulates lifespan by sequestering the heat-shock transcription factor hsf-1 to negatively regulate its binding to DNA and its transcriptional activity. The sequence is that of WASH complex subunit homolog 3 (ddl-1) from Caenorhabditis elegans.